Here is a 99-residue protein sequence, read N- to C-terminus: Large ribosomal subunit protein eL21 (99 aa).

The span at 1–14 shows a compositional bias: polar residues; that stretch reads MPNSNGPLSNSGGK. Residues 1 to 38 are disordered; that stretch reads MPNSNGPLSNSGGKLQNDPRDRGTSPPQRAIADYDDGE.

It belongs to the eukaryotic ribosomal protein eL21 family.

The chain is Large ribosomal subunit protein eL21 from Halobacterium salinarum (strain ATCC 29341 / DSM 671 / R1).